Reading from the N-terminus, the 435-residue chain is D-inositol 3-phosphate glycosyltransferase (435 aa).

H16 is a 1D-myo-inositol 3-phosphate binding site. Residues 22-23 and G30 each bind UDP-N-acetyl-alpha-D-glucosamine; that span reads QP. Residues 27-32, K85, Y118, T142, and R162 contribute to the 1D-myo-inositol 3-phosphate site; that span reads DAGGMN. UDP-N-acetyl-alpha-D-glucosamine is bound by residues R237, K242, and V303. The Mg(2+) site is built by Y312, R313, and A315. The UDP-N-acetyl-alpha-D-glucosamine site is built by E325 and E333. T339 is a Mg(2+) binding site.

The protein belongs to the glycosyltransferase group 1 family. MshA subfamily. As to quaternary structure, homodimer.

It carries out the reaction 1D-myo-inositol 3-phosphate + UDP-N-acetyl-alpha-D-glucosamine = 1D-myo-inositol 2-acetamido-2-deoxy-alpha-D-glucopyranoside 3-phosphate + UDP + H(+). Catalyzes the transfer of a N-acetyl-glucosamine moiety to 1D-myo-inositol 3-phosphate to produce 1D-myo-inositol 2-acetamido-2-deoxy-glucopyranoside 3-phosphate in the mycothiol biosynthesis pathway. The sequence is that of D-inositol 3-phosphate glycosyltransferase from Kineococcus radiotolerans (strain ATCC BAA-149 / DSM 14245 / SRS30216).